Here is a 392-residue protein sequence, read N- to C-terminus: MSIKTIKDCDFAGKRALVRCDFNVPLKEGNITDDTRIRAALPTIEYLKSQGARVILMSHLGRPKGEKNLKYSLMPVAKRLSELLGQDVKMLPDCIGDEVATTVSCMKNGDIVLLENLRFYKEEEENCDAFVRKLSQNGDIFVNDAFGTAHRAHASTAGLAAYLPAVGGFLMEKEDEFLGKILRNPESPFVAIIGGSKVSSKIAVLESLLPKSNVMVIGGGMAYTFLKVEGYSIGQSLLENEYIDVASSFLKKAKELDVKVILPLDHVVASEFREDSIPEYVDSVDIPNDKVGMDIGEKTLRKIEEVLVSAKTVIWNGPLGVFEFNSFSKGTAKVAEYVASCSGITVVGGGDSVAAVNKFNLSEKITHVSTGGGASLEYLEGKVLPGIKVLEK.

Residues 21–23 (DFN), Arg-36, 59–62 (HLGR), Arg-118, and Arg-151 contribute to the substrate site. ATP is bound by residues Lys-201, Gly-292, Glu-323, and 349-352 (GGDS).

It belongs to the phosphoglycerate kinase family. Monomer.

Its subcellular location is the cytoplasm. It catalyses the reaction (2R)-3-phosphoglycerate + ATP = (2R)-3-phospho-glyceroyl phosphate + ADP. It participates in carbohydrate degradation; glycolysis; pyruvate from D-glyceraldehyde 3-phosphate: step 2/5. The sequence is that of Phosphoglycerate kinase from Borrelia turicatae (strain 91E135).